The sequence spans 340 residues: Anthocyanidin reductase (340 aa).

NADP(+) contacts are provided by K49 and Y169.

It belongs to the NAD(P)-dependent epimerase/dehydratase family. Dihydroflavonol-4-reductase subfamily. In terms of assembly, homo- or heterodimer. Flowers and young siliques. Detected specifically in the endothelium of seed coat.

It catalyses the reaction a (2R,3R)-flavan-3-ol + 2 NAD(+) = an anthocyanidin with a 3-hydroxy group + 2 NADH + 2 H(+). It carries out the reaction a (2R,3R)-flavan-3-ol + 2 NADP(+) = an anthocyanidin with a 3-hydroxy group + 2 NADPH + 2 H(+). The protein operates within secondary metabolite biosynthesis; flavonoid biosynthesis. Inhibited by (+)-catechin, quercetin and (+)- and (-)-dihydroquercetin. Not inhibited by salt. Positive cooperativity with NADPH acting as cosubstrate and modulator. In terms of biological role, involved in the biosynthesis of condensed tannins. Converts cyanidin into (-)-epicatechin as the major product. The polypeptide is Anthocyanidin reductase (BAN) (Arabidopsis thaliana (Mouse-ear cress)).